A 672-amino-acid polypeptide reads, in one-letter code: DNA ligase (672 aa).

NAD(+) contacts are provided by residues 32–36, 82–83, and glutamate 113; these read DEKYD and SL. The active-site N6-AMP-lysine intermediate is lysine 115. Arginine 136, glutamate 173, lysine 290, and lysine 314 together coordinate NAD(+). Zn(2+) is bound by residues cysteine 408, cysteine 411, cysteine 427, and cysteine 433. A BRCT domain is found at 592 to 672; the sequence is DNNNTLFRKK…EFLNIINVYL (81 aa).

This sequence belongs to the NAD-dependent DNA ligase family. LigA subfamily. Mg(2+) is required as a cofactor. It depends on Mn(2+) as a cofactor.

The catalysed reaction is NAD(+) + (deoxyribonucleotide)n-3'-hydroxyl + 5'-phospho-(deoxyribonucleotide)m = (deoxyribonucleotide)n+m + AMP + beta-nicotinamide D-nucleotide.. DNA ligase that catalyzes the formation of phosphodiester linkages between 5'-phosphoryl and 3'-hydroxyl groups in double-stranded DNA using NAD as a coenzyme and as the energy source for the reaction. It is essential for DNA replication and repair of damaged DNA. The sequence is that of DNA ligase from Buchnera aphidicola subsp. Baizongia pistaciae (strain Bp).